The chain runs to 456 residues: MKIEEVKSTVRTQRIAAHSHVKGLGLDEVGAAVHSAAGLVGQKAAREAAGIVVDLIKSKKMAGRALLLAGPPGTGKTAIALAIAQELGNKVPFCPMVGSEVFSNEIKKTEVLMENFRRSIGLRIRETKEVYEGEVTELTPVETENPMGGYGKTISNVVIGLKTAKGTKQLKLDPSIFDALQKEKVEVGDVIYIEANSGAVKRQGRSDTFATEFDLETEEYVPLPKGDVHKKKEVIQDVTLHDLDVANARPQGGQDVLSMMGQLMKPKKTEITDKLRMEINKVVNKYIDQGIAELVPGVLFIDEIHMLDLETFTYLHKSLESPIAPIVIFATNRGRCVIRGTTDIVSPHGIPLDLLDRLLIIRTLLYSTADMEQIIKLRAQTEGLQLEENAFTRLSEIGTSSTLRYAVQLLTPAHQMCKVNGRNQISKDDIEDVHSLFLDAKRSSKHLSEKNNKFML.

70–77 (GPPGTGKT) is a binding site for ATP.

This sequence belongs to the RuvB family. In terms of assembly, forms homohexameric rings. May form a dodecamer with rept made of two stacked hexameric rings. Component of the chromatin remodeling Ino80 complex. Interacts with Myc and rept. As to expression, higher expression occurs in primordia of mesoderm, anterior and posterior midgut and cephalic furrow early in gastrulation, as well as in endoderm and mesoderm lineages during germ band extension. Later in development expression is only maintained in endoderm cells. Expressed in thoracic and abdominal segment neural precursors of all embryonic chordotonal organs.

The protein resides in the nucleus. The enzyme catalyses ATP + H2O = ADP + phosphate + H(+). Its function is as follows. Acts as a transcriptional coactivator in Wg signaling caused by altered arm signaling. Pont and rept interfere antagonistically with nuclear arm signaling function, and are required to enhance or reduce arm activity, respectively. Also an essential cofactor for the normal function of Myc; required for cellular proliferation and growth. Functionally, proposed core component of the chromatin remodeling Ino80 complex which is involved in transcriptional regulation, DNA replication and probably DNA repair. The protein is RuvB-like helicase 1 of Drosophila melanogaster (Fruit fly).